Here is a 207-residue protein sequence, read N- to C-terminus: Thymidylate kinase (207 aa).

7 to 14 is a binding site for ATP; the sequence is GCEGSGKS.

Belongs to the thymidylate kinase family.

It catalyses the reaction dTMP + ATP = dTDP + ADP. Functionally, phosphorylation of dTMP to form dTDP in both de novo and salvage pathways of dTTP synthesis. In Chlamydia caviae (strain ATCC VR-813 / DSM 19441 / 03DC25 / GPIC) (Chlamydophila caviae), this protein is Thymidylate kinase.